The primary structure comprises 86 residues: MIOREX complex component 7 (86 aa).

Associates with the mitochondrial ribosome.

Its subcellular location is the mitochondrion. In terms of biological role, component of MIOREX complexes, large expressome-like assemblies of ribosomes with factors involved in all the steps of post-transcriptional gene expression. This Saccharomyces cerevisiae (strain ATCC 204508 / S288c) (Baker's yeast) protein is MIOREX complex component 7.